A 339-amino-acid polypeptide reads, in one-letter code: Protein FAM50A (339 aa).

Residues 1–31 are disordered; sequence MAQYKGAASEAGRAMHLMKKREKQREQMEQM. Ala-2 carries the post-translational modification N-acetylalanine. Lys-100 is covalently cross-linked (Glycyl lysine isopeptide (Lys-Gly) (interchain with G-Cter in SUMO2)). The tract at residues 121 to 177 is disordered; sequence SFTLEEEEEGGEEEEEAAMYEEEMEREEITTKKRKLGKNPDVDTSFLPDRDREEEEN. A compositionally biased stretch (acidic residues) spans 124 to 146; sequence LEEEEEGGEEEEEAAMYEEEMER. The short motif at 152–155 is the Nuclear localization signal element; that stretch reads KKRK. Residues 168–177 show a composition bias toward basic and acidic residues; sequence PDRDREEEEN.

The protein belongs to the FAM50 family. In terms of assembly, interacts with EFTUD2, a component of the spliceosome U5 complex. Interacts with DDX41, a component of the spliceosome C complex. Widely expressed in fetal and adult tissues. Mostly abundant in fetal brain, liver and kidney; in the adult, high levels were also observed in heart, skeletal muscle, spleen, thymus, prostate and small intestine. Expressed in fetal cerebellum and hypothalamus. Low expression is observed in fetal temporal lobe.

It is found in the nucleus. Functionally, probably involved in the regulation of pre-mRNA splicing. In Homo sapiens (Human), this protein is Protein FAM50A (FAM50A).